A 651-amino-acid polypeptide reads, in one-letter code: Endo-1,4-beta-xylanase A (651 aa).

Positions 1–30 are cleaved as a signal peptide; it reads MKRKVKKMAAMATSIIMAIMIILHSIPVLA. One can recognise a GH11 domain in the interval 33 to 227; it reads IIYDNETGTH…SSGYANVYKN (195 aa). Residue E124 is the Nucleophile of the active site. E214 (proton donor) is an active-site residue. CBM6 domains lie at 250-370, 387-507, and 527-647; these read SIIE…FIFS, SIIQ…FVFT, and SNIQ…FVFS. The Ca(2+) site is built by E253 and E255. A D-xylotriose-binding site is contributed by T270. R275 is a Ca(2+) binding site. The stretch at 278 to 339 is repeat 1; that stretch reads GYIENGNTVT…SSTGSWNTYQ (62 aa). The 3 X 61 AA approximate repeats stretch occupies residues 278–616; the sequence is GYIENGNTVT…GSTGSFDTYR (339 aa). 3 residues coordinate D-xylotriose: Y279, N336, and N363. The D-xylobiose site is built by Y279, N336, and N363. D365 serves as a coordination point for Ca(2+). The stretch at 415-476 is repeat 2; it reads GYIENGYSTT…PSTNSWDSYQ (62 aa). 3 residues coordinate Ca(2+): Q530, E532, and S552. Repeat 3 spans residues 555 to 616; that stretch reads GYIENGYSTT…GSTGSFDTYR (62 aa). Residues Y556, D613, and N640 each coordinate D-xylotriose. D642 lines the Ca(2+) pocket.

It belongs to the glycosyl hydrolase 11 (cellulase G) family.

It is found in the secreted. It catalyses the reaction Endohydrolysis of (1-&gt;4)-beta-D-xylosidic linkages in xylans.. It participates in glycan degradation; xylan degradation. In terms of biological role, endoxylanase that degrades arabinoxylan and glucuronoxylan to xylobiose and xylotriose (in vitro). The polypeptide is Endo-1,4-beta-xylanase A (xynA) (Thermoclostridium stercorarium (Clostridium stercorarium)).